The following is a 314-amino-acid chain: 3'-5' exoribonuclease YhaM (314 aa).

One can recognise an HD domain in the interval 163–279; sequence HVVSMLNLAK…LHYIDNLDAK (117 aa).

This sequence belongs to the YhaM family.

Functionally, shows a 3'-5' exoribonuclease activity. This chain is 3'-5' exoribonuclease YhaM, found in Bacillus velezensis (strain DSM 23117 / BGSC 10A6 / LMG 26770 / FZB42) (Bacillus amyloliquefaciens subsp. plantarum).